Here is a 367-residue protein sequence, read N- to C-terminus: Peptide chain release factor 2 (367 aa).

An N5-methylglutamine modification is found at Q249.

The protein belongs to the prokaryotic/mitochondrial release factor family. Post-translationally, methylated by PrmC. Methylation increases the termination efficiency of RF2.

Its subcellular location is the cytoplasm. Peptide chain release factor 2 directs the termination of translation in response to the peptide chain termination codons UGA and UAA. The protein is Peptide chain release factor 2 of Thermotoga sp. (strain RQ2).